We begin with the raw amino-acid sequence, 124 residues long: Large ribosomal subunit protein bL12 (124 aa).

This sequence belongs to the bacterial ribosomal protein bL12 family. As to quaternary structure, homodimer. Part of the ribosomal stalk of the 50S ribosomal subunit. Forms a multimeric L10(L12)X complex, where L10 forms an elongated spine to which 2 to 4 L12 dimers bind in a sequential fashion. Binds GTP-bound translation factors.

Functionally, forms part of the ribosomal stalk which helps the ribosome interact with GTP-bound translation factors. Is thus essential for accurate translation. In Janthinobacterium sp. (strain Marseille) (Minibacterium massiliensis), this protein is Large ribosomal subunit protein bL12.